The following is a 627-amino-acid chain: Siderophore iron transporter ARN1 (627 aa).

Residues 1-70 (MESVHSRDPV…TEIIGSAYNK (70 aa)) lie on the Extracellular side of the membrane. Residues 71 to 91 (WYLQAILLLSAFICGYGYGLD) form a helical membrane-spanning segment. The Cytoplasmic portion of the chain corresponds to 92-110 (GNIRYIYTGYATSSYSEHS). The helical transmembrane segment at 111 to 131 (LLSTINVINAVVSAASQIIYA) threads the bilayer. At 132 to 135 (RLSD) the chain is on the extracellular side. Residues 136–156 (VFGRLYLFISAVILYVVGTII) traverse the membrane as a helical segment. The Cytoplasmic portion of the chain corresponds to 157-167 (QSQAYDVQRYA). Residues 168–188 (AGAIFYNAGYVGVILILLIIL) form a helical membrane-spanning segment. At 189–197 (SDFSSLKWR) the chain is on the extracellular side. Residues 198-218 (LLYQFVPTWPFIINTWIAGNI) form a helical membrane-spanning segment. Topologically, residues 219–231 (TSRANPVVNWSWD) are cytoplasmic. Residues 232–252 (VGMWAFIFPLSCVPIVLCMLH) traverse the membrane as a helical segment. At 253–290 (MQWRARKTPEWHALKGQKSYYQEHGFIKILKQLFWMLD) the chain is on the extracellular side. The chain crosses the membrane as a helical span at residues 291–311 (VVGVLLMGCSLGCILVPLTLA). Residues 312–323 (GGVKTTWNDSRL) lie on the Cytoplasmic side of the membrane. A helical membrane pass occupies residues 324 to 344 (IGPFVLGFVLIPILWIWEYRF). Topologically, residues 345 to 367 (ARDPILPYRLVKDRAVWSSMGIS) are extracellular. Residues 368–388 (FLIDFIYYMAADYLYTVMIVA) form a helical membrane-spanning segment. Residues 389-398 (VNESVKSATR) lie on the Cytoplasmic side of the membrane. Residues 399–419 (IATLSSFVSTVASPFFALLVT) form a helical membrane-spanning segment. Topologically, residues 420-424 (RCTRL) are extracellular. A helical transmembrane segment spans residues 425–445 (KPFIMFGCALWMVAMGLLYHF). Residues 446-454 (RGGSQSHSG) lie on the Cytoplasmic side of the membrane. A helical transmembrane segment spans residues 455–475 (IIGALCVWGVGTTLFTYPVTV). Residues 476–563 (SVQSAVSHEN…LMNAYKYVQR (88 aa)) are Extracellular-facing. The helical transmembrane segment at 564–584 (LETIVALVFCVPLIAFSLCLR) threads the bilayer. Over 585-627 (DPKLTDTVAVEYIEDGEYVDTKDNDPILDWFEKLPSKFTFKRE) the chain is Cytoplasmic.

The protein belongs to the major facilitator superfamily.

It localises to the cell membrane. The protein localises to the endosome membrane. Involved in the transport of siderophore ferrichrome and so has a role in iron homeostasis. This is Siderophore iron transporter ARN1 (ARN1) from Saccharomyces cerevisiae (strain ATCC 204508 / S288c) (Baker's yeast).